The primary structure comprises 422 residues: Glutamate-1-semialdehyde 2,1-aminomutase (422 aa).

K264 is subject to N6-(pyridoxal phosphate)lysine.

This sequence belongs to the class-III pyridoxal-phosphate-dependent aminotransferase family. HemL subfamily. As to quaternary structure, homodimer. Requires pyridoxal 5'-phosphate as cofactor.

It localises to the cytoplasm. The enzyme catalyses (S)-4-amino-5-oxopentanoate = 5-aminolevulinate. The protein operates within porphyrin-containing compound metabolism; protoporphyrin-IX biosynthesis; 5-aminolevulinate from L-glutamyl-tRNA(Glu): step 2/2. In Clostridium acetobutylicum (strain ATCC 824 / DSM 792 / JCM 1419 / IAM 19013 / LMG 5710 / NBRC 13948 / NRRL B-527 / VKM B-1787 / 2291 / W), this protein is Glutamate-1-semialdehyde 2,1-aminomutase.